A 384-amino-acid chain; its full sequence is Monomethylxanthine methyltransferase 2 (384 aa).

Tyr18, Cys61, Asn66, Asp100, Leu101, Ser139, Phe140, and Cys156 together coordinate S-adenosyl-L-homocysteine. 3 residues coordinate theobromine: Tyr157, His160, and Trp161. 3 residues coordinate Mg(2+): Asn178, Phe262, and Asn263. Residue Tyr368 participates in theobromine binding.

It belongs to the methyltransferase superfamily. Type-7 methyltransferase family. Mg(2+) is required as a cofactor. Expressed, at low levels, in young leaves, floral buds and immature fruits (grains), but not in old leaves and mature fruits. Highly expressed in developing endosperm and flower buds. Detected in young leaves.

The catalysed reaction is 7-methylxanthine + S-adenosyl-L-methionine = theobromine + S-adenosyl-L-homocysteine + H(+). It participates in alkaloid biosynthesis. Its function is as follows. Involved in the biosynthesis of caffeine. Catalyzes the conversion of 7-methylxanthine (7mX) to theobromine and with a lower activity of paraxanthine to caffeine. Does not have 1-N-methylation activity. The protein is Monomethylxanthine methyltransferase 2 of Coffea arabica (Arabian coffee).